The sequence spans 553 residues: Urocanate hydratase (553 aa).

Residues 51 to 52 (GG), glutamine 129, 175 to 177 (GMG), glutamate 195, arginine 200, 241 to 242 (NA), 262 to 266 (QTSAH), 272 to 273 (YL), and tyrosine 321 each bind NAD(+). The active site involves cysteine 409. NAD(+) is bound at residue glycine 491.

The protein belongs to the urocanase family. NAD(+) serves as cofactor.

Its subcellular location is the cytoplasm. It catalyses the reaction 4-imidazolone-5-propanoate = trans-urocanate + H2O. The protein operates within amino-acid degradation; L-histidine degradation into L-glutamate; N-formimidoyl-L-glutamate from L-histidine: step 2/3. In terms of biological role, catalyzes the conversion of urocanate to 4-imidazolone-5-propionate. The protein is Urocanate hydratase of Sphingopyxis alaskensis (strain DSM 13593 / LMG 18877 / RB2256) (Sphingomonas alaskensis).